The sequence spans 211 residues: Imidazole glycerol phosphate synthase subunit HisH (211 aa).

The 206-residue stretch at 1–206 (MIGIIDYGRG…GKWVNEDATV (206 aa)) folds into the Glutamine amidotransferase type-1 domain. The active-site Nucleophile is C79. Catalysis depends on residues H181 and E183.

In terms of assembly, heterodimer of HisH and HisF.

It is found in the cytoplasm. It catalyses the reaction 5-[(5-phospho-1-deoxy-D-ribulos-1-ylimino)methylamino]-1-(5-phospho-beta-D-ribosyl)imidazole-4-carboxamide + L-glutamine = D-erythro-1-(imidazol-4-yl)glycerol 3-phosphate + 5-amino-1-(5-phospho-beta-D-ribosyl)imidazole-4-carboxamide + L-glutamate + H(+). It carries out the reaction L-glutamine + H2O = L-glutamate + NH4(+). The protein operates within amino-acid biosynthesis; L-histidine biosynthesis; L-histidine from 5-phospho-alpha-D-ribose 1-diphosphate: step 5/9. In terms of biological role, IGPS catalyzes the conversion of PRFAR and glutamine to IGP, AICAR and glutamate. The HisH subunit catalyzes the hydrolysis of glutamine to glutamate and ammonia as part of the synthesis of IGP and AICAR. The resulting ammonia molecule is channeled to the active site of HisF. The chain is Imidazole glycerol phosphate synthase subunit HisH from Desulfitobacterium hafniense (strain DSM 10664 / DCB-2).